The primary structure comprises 157 residues: Ribonuclease H (157 aa).

The 144-residue stretch at 2 to 145 folds into the RNase H type-1 domain; sequence NAEISKIYTD…CDAIARAFAA (144 aa). 4 residues coordinate Mg(2+): Asp-11, Glu-50, Asp-74, and Asp-137.

This sequence belongs to the RNase H family. In terms of assembly, monomer. It depends on Mg(2+) as a cofactor.

Its subcellular location is the cytoplasm. It catalyses the reaction Endonucleolytic cleavage to 5'-phosphomonoester.. In terms of biological role, endonuclease that specifically degrades the RNA of RNA-DNA hybrids. This Cyanothece sp. (strain PCC 7425 / ATCC 29141) protein is Ribonuclease H.